The sequence spans 225 residues: Dynein axonemal assembly factor 19 (225 aa).

A coiled-coil region spans residues 8 to 32 (DFRELERELANALAADQKYSRENDA).

Belongs to the DNAAF19/PR46b family. As to quaternary structure, homodimer.

The protein resides in the cytoplasm. The protein localises to the cell projection. Its subcellular location is the cilium. It localises to the flagellum. Dynein-attachment factor required for cilia motility. The polypeptide is Dynein axonemal assembly factor 19 (dnaaf19) (Xenopus tropicalis (Western clawed frog)).